The chain runs to 186 residues: CASP-like protein ARALYDRAFT_316979 (186 aa).

Residues 1-23 (MRRNGDGEEVVAKRRRRIKELVQ) are Cytoplasmic-facing. A helical transmembrane segment spans residues 24 to 44 (VALRGGCLAASATAMAVMLTA). The Extracellular portion of the chain corresponds to 45–70 (TEEGVADIYGFKLTLSSNWSFSPSYQ). Asn-62 is a glycosylation site (N-linked (GlcNAc...) asparagine). The chain crosses the membrane as a helical span at residues 71–91 (YVVGACTGTVLYSLFQLCLGV). Topologically, residues 92–115 (YRLLTGSPITPSRFQAWLCFTSDQ) are cytoplasmic. Residues 116 to 132 (LFGYLMMSAGSAGSGVT) form a helical membrane-spanning segment. Residues 133 to 161 (NLNKTGIRHTPLPDFCKTLSSFCNHVALS) are Extracellular-facing. An N-linked (GlcNAc...) asparagine glycan is attached at Asn-135. Residues 162–182 (LLLVFLSFIFLASSSFFTVLV) traverse the membrane as a helical segment. The Cytoplasmic segment spans residues 183-186 (LSTP).

It belongs to the Casparian strip membrane proteins (CASP) family. In terms of assembly, homodimer and heterodimers.

The protein resides in the cell membrane. This is CASP-like protein ARALYDRAFT_316979 from Arabidopsis lyrata subsp. lyrata (Lyre-leaved rock-cress).